The following is a 240-amino-acid chain: Splicing factor U2AF 35 kDa subunit (240 aa).

An N-acetylalanine modification is found at A2. The segment at 12 to 40 (EKDKVNCSFYFKIGACRHGDRCSRLHNKP) adopts a C3H1-type 1 zinc-finger fold. K39 bears the N6-methyllysine mark. Residues S61 and S145 each carry the phosphoserine modification. Positions 65 to 147 (LRCAVSDVEM…QPIHAELSPV (83 aa)) constitute an RRM domain. The C3H1-type 2 zinc finger occupies 149–176 (DFREACCRQYEMGECTRGGFCNFMHLKP). Residue R165 is modified to Omega-N-methylarginine. Positions 183 to 240 (RELYGRRRKKHRSRSRSRERRSRSRDRGRGGGGGGGGGGGGRERDRRRSRDRERSGRF) are disordered. The segment covering 188-208 (RRRKKHRSRSRSRERRSRSRD) has biased composition (basic residues). Gly residues predominate over residues 212–222 (GGGGGGGGGGG). The span at 223–240 (GRERDRRRSRDRERSGRF) shows a compositional bias: basic and acidic residues.

This sequence belongs to the splicing factor SR family. Identified in the spliceosome C complex. Heterodimer with U2AF2. Interacts (via RS domain) with PHF5A (via N-terminus). Interacts with ZRANB2. Interacts with SDE2. Interacts with SF3B1.

It localises to the nucleus. Its subcellular location is the nucleus speckle. Its function is as follows. Plays a critical role in both constitutive and enhancer-dependent splicing by mediating protein-protein interactions and protein-RNA interactions required for accurate 3'-splice site selection. Recruits U2 snRNP to the branch point. Directly mediates interactions between U2AF2 and proteins bound to the enhancers and thus may function as a bridge between U2AF2 and the enhancer complex to recruit it to the adjacent intron. The chain is Splicing factor U2AF 35 kDa subunit (U2AF1) from Homo sapiens (Human).